The chain runs to 134 residues: Profilin-5 (134 aa).

This sequence belongs to the profilin family. Occurs in many kinds of cells as a complex with monomeric actin in a 1:1 ratio. In terms of tissue distribution, specifically expressed in mature pollen grains. Expressed in germinating pollen grains. Expressed in growing pollen tubes (at protein level).

The protein localises to the cytoplasm. The protein resides in the cytoskeleton. Its function is as follows. Binds to actin monomers and regulates the organization of the actin cytoskeleton. At high concentrations, profilin prevents the polymerization of actin, whereas it enhances it at low concentrations. At low concentrations, associates with the poly-proline motif of formins to enhance actin filament elongation rate. Acts redundantly with PRF4 to regulate apical actin polymerization at the tip of pollen tube and control polarized pollen tube growth. Functions probably by favoring formin-mediated actin polymerization at pollen tube tips. This Arabidopsis thaliana (Mouse-ear cress) protein is Profilin-5.